A 130-amino-acid polypeptide reads, in one-letter code: DNA-directed RNA polymerase subunit omega (130 aa).

A disordered region spans residues 109–130 (EEELLKGLEGLAPPEEQPEEDE).

This sequence belongs to the RNA polymerase subunit omega family. In terms of assembly, the RNAP catalytic core consists of 2 alpha, 1 beta, 1 beta' and 1 omega subunit. When a sigma factor is associated with the core the holoenzyme is formed, which can initiate transcription.

The catalysed reaction is RNA(n) + a ribonucleoside 5'-triphosphate = RNA(n+1) + diphosphate. Its function is as follows. Promotes RNA polymerase assembly. Latches the N- and C-terminal regions of the beta' subunit thereby facilitating its interaction with the beta and alpha subunits. This is DNA-directed RNA polymerase subunit omega from Rhodopseudomonas palustris (strain BisA53).